The sequence spans 165 residues: Hydroxyproline-rich systemin A (165 aa).

An N-terminal signal peptide occupies residues 1 to 18 (MRVLFLIYLILSPFGAEA). Residues 19–35 (RTLLENHEGLNVGSGYG) constitute a propeptide that is removed on maturation. 2 disordered regions span residues 33-70 (GYGR…TSEN) and 142-165 (YWNR…LHSY). P42, P43, P45, P49, and P50 each carry 4-hydroxyproline. P42, P43, P45, P49, and P50 each carry an O-linked (Ara...) hydroxyproline glycan. Positions 54–143 (VSNSVSPTRT…FDSKSDERYW (90 aa)) are excised as a propeptide. 3 positions are modified to 4-hydroxyproline: P150, P151, and P153. P150, P151, and P153 each carry an O-linked (Ara...) hydroxyproline glycan. A propeptide spanning residues 162-165 (LHSY) is cleaved from the precursor.

Post-translationally, O-glycosylated; contains pentose side chains. Expressed in leaves.

The protein localises to the secreted. In terms of biological role, activates a lipid-based signal transduction pathway in which linolenic acid is converted to jasmonic acid, a potent activator of defense gene transcription, including proteinase inhibitors. This is Hydroxyproline-rich systemin A from Nicotiana tabacum (Common tobacco).